A 277-amino-acid chain; its full sequence is Large ribosomal subunit protein uL2 (277 aa).

Residues 218 to 277 (PTVRGSVMNPNDHPHGGGEGKSPIGHPSPLTPWGKPALGYKTRKNKKYSDGMIIKRRGQK) form a disordered region.

It belongs to the universal ribosomal protein uL2 family. Part of the 50S ribosomal subunit. Forms a bridge to the 30S subunit in the 70S ribosome.

Functionally, one of the primary rRNA binding proteins. Required for association of the 30S and 50S subunits to form the 70S ribosome, for tRNA binding and peptide bond formation. It has been suggested to have peptidyltransferase activity; this is somewhat controversial. Makes several contacts with the 16S rRNA in the 70S ribosome. This is Large ribosomal subunit protein uL2 from Clostridium novyi (strain NT).